The primary structure comprises 284 residues: 3-methyl-2-oxobutanoate hydroxymethyltransferase 2 (284 aa).

The Mg(2+) site is built by D49 and D88. Residues 49–50 (DS), D88, and K118 contribute to the 3-methyl-2-oxobutanoate site. E120 provides a ligand contact to Mg(2+). The active-site Proton acceptor is the E187.

This sequence belongs to the PanB family. In terms of assembly, homodecamer; pentamer of dimers. Requires Mg(2+) as cofactor.

The protein localises to the cytoplasm. The catalysed reaction is 3-methyl-2-oxobutanoate + (6R)-5,10-methylene-5,6,7,8-tetrahydrofolate + H2O = 2-dehydropantoate + (6S)-5,6,7,8-tetrahydrofolate. Its pathway is cofactor biosynthesis; (R)-pantothenate biosynthesis; (R)-pantoate from 3-methyl-2-oxobutanoate: step 1/2. Its function is as follows. Catalyzes the reversible reaction in which hydroxymethyl group from 5,10-methylenetetrahydrofolate is transferred onto alpha-ketoisovalerate to form ketopantoate. The chain is 3-methyl-2-oxobutanoate hydroxymethyltransferase 2 from Burkholderia ambifaria (strain ATCC BAA-244 / DSM 16087 / CCUG 44356 / LMG 19182 / AMMD) (Burkholderia cepacia (strain AMMD)).